Consider the following 682-residue polypeptide: Two-component system protein A (682 aa).

The disordered stretch occupies residues 11–41 (SLDDNDNGQQHQDEVQAKHQDQGHTCPSRPS). Residues 21–32 (HQDEVQAKHQDQ) show a composition bias toward basic and acidic residues. PAS domains lie at 45-105 (LSRI…PILY) and 166-239 (MNET…LREG). Residues 241-292 (IEDEGWRYRRDGSRFWANVLITPIYQFGQHVGFVKVTRDLTERKEAEACMIA) form the PAC domain. The Histidine kinase domain occupies 307-530 (NISHEIRTPM…VFWFTAKMGG (224 aa)). Residue His310 is modified to Phosphohistidine; by autocatalysis. In terms of domain architecture, Response regulatory spans 563–680 (HVLLVEDNIV…QLLRVLWKWF (118 aa)). Asp615 is subject to 4-aspartylphosphate.

In terms of processing, activation probably requires a transfer of a phosphate group between a His in the histidine kinase domain and an Asp of the response regulatory domain.

It is found in the cytoplasm. It carries out the reaction ATP + protein L-histidine = ADP + protein N-phospho-L-histidine.. Its function is as follows. May be part of a two-component regulatory system required for formation of conidia on certain growth media. The protein is Two-component system protein A of Emericella nidulans (strain FGSC A4 / ATCC 38163 / CBS 112.46 / NRRL 194 / M139) (Aspergillus nidulans).